Reading from the N-terminus, the 244-residue chain is Membrane-spanning 4-domains subfamily A member 6B (244 aa).

The Cytoplasmic portion of the chain corresponds to 1-46 (MIPQVVTSETVAMISPNGMSLPQTDKPQPFHQWQDSLKKHLKAEIK). Residues 47-67 (VMAAIQIMCAVMVLSLGIILA) form a helical membrane-spanning segment. Residues 68-84 (SVPSNLHFTSVFSVLLK) are Extracellular-facing. The chain crosses the membrane as a helical span at residues 85–105 (SGYPFIGALFFIVSGILSIVT). The Cytoplasmic portion of the chain corresponds to 106–121 (ETKSTKILVDSSLTLN). A helical transmembrane segment spans residues 122 to 142 (ILSVSFAFMGIIIISVSLAGL). Over 143 to 176 (HPASEQCLQSKELRPTEYHYYQFLDRNECFAAKS) the chain is Extracellular. Residues 177–197 (VLAGVFSLMLISTMLELGLAV) traverse the membrane as a helical segment. The Cytoplasmic segment spans residues 198 to 244 (LTAMLWWKQSHSNIPGNVMFLPHSSNNDSNMESKVLCNPSYEEQLVC).

The protein belongs to the MS4A family. As to expression, expressed at high levels in thymus, spleen, and peripheral lymph nodes, with less abundant levels in non-lymphoid tissues.

It is found in the membrane. Functionally, may be involved in signal transduction as a component of a multimeric receptor complex. In Mus musculus (Mouse), this protein is Membrane-spanning 4-domains subfamily A member 6B (Ms4a6b).